The sequence spans 152 residues: 3-hydroxyacyl-[acyl-carrier-protein] dehydratase FabZ (152 aa).

His54 is a catalytic residue.

Belongs to the thioester dehydratase family. FabZ subfamily.

It is found in the cytoplasm. It carries out the reaction a (3R)-hydroxyacyl-[ACP] = a (2E)-enoyl-[ACP] + H2O. In terms of biological role, involved in unsaturated fatty acids biosynthesis. Catalyzes the dehydration of short chain beta-hydroxyacyl-ACPs and long chain saturated and unsaturated beta-hydroxyacyl-ACPs. The protein is 3-hydroxyacyl-[acyl-carrier-protein] dehydratase FabZ of Buchnera aphidicola subsp. Schizaphis graminum (strain Sg).